Here is a 365-residue protein sequence, read N- to C-terminus: Isopentenyl-diphosphate delta-isomerase (365 aa).

Residue 8 to 9 coordinates substrate; it reads RK. FMN contacts are provided by residues 67 to 69, S97, and N126; that span reads SIT. Residue 97 to 99 participates in substrate binding; sequence SQR. Q160 serves as a coordination point for substrate. Position 161 (E161) interacts with Mg(2+). Residues K192, T222, 272–274, and 293–294 contribute to the FMN site; these read GIR and AL.

This sequence belongs to the IPP isomerase type 2 family. As to quaternary structure, homooctamer. Dimer of tetramers. FMN is required as a cofactor. NADPH serves as cofactor. It depends on Mg(2+) as a cofactor.

It is found in the cytoplasm. It catalyses the reaction isopentenyl diphosphate = dimethylallyl diphosphate. Functionally, involved in the biosynthesis of isoprenoids. Catalyzes the 1,3-allylic rearrangement of the homoallylic substrate isopentenyl (IPP) to its allylic isomer, dimethylallyl diphosphate (DMAPP). The sequence is that of Isopentenyl-diphosphate delta-isomerase from Methanosarcina mazei (strain ATCC BAA-159 / DSM 3647 / Goe1 / Go1 / JCM 11833 / OCM 88) (Methanosarcina frisia).